The sequence spans 321 residues: uncharacterized protein (321 aa).

The 58-residue stretch at 1–58 folds into the HTH lysR-type domain; that stretch reads MTPAQLRAYSAVVRLGSVRAAAAELGLSDAGVSMHVAALRKELDDPLFTRTGAGLAFT. A DNA-binding region (H-T-H motif) is located at residues 18–37; the sequence is VRAAAAELGLSDAGVSMHVA.

This sequence belongs to the LysR transcriptional regulatory family.

This is an uncharacterized protein from Mycobacterium tuberculosis (strain CDC 1551 / Oshkosh).